Reading from the N-terminus, the 471-residue chain is Putative multidrug resistance protein MdtD (471 aa).

Residues 1–11 (MTDLPDSTRWQ) are Periplasmic-facing. The chain crosses the membrane as a helical span at residues 12–32 (LWIVAFGFFMQSLDTTIVNTA). Over 33-48 (LPSMAQSLGESPLHMH) the chain is Cytoplasmic. Residues 49 to 69 (MVIVSYVLTVAVMLPASGWLA) traverse the membrane as a helical segment. Residues 70-76 (DKVGVRN) are Periplasmic-facing. The chain crosses the membrane as a helical span at residues 77-97 (IFFTAIVLFTLGSLFCALSGT). At 98–101 (LNEL) the chain is on the cytoplasmic side. The chain crosses the membrane as a helical span at residues 102-124 (LLARALQGVGGAMMVPVGRLTVM). The Periplasmic segment spans residues 125–137 (KIVPREQYMAAMT). The chain crosses the membrane as a helical span at residues 138–158 (FVTLPGQIGPLLGPALGGLLV). The Cytoplasmic portion of the chain corresponds to 159 to 164 (EYASWH). The chain crosses the membrane as a helical span at residues 165–185 (WIFLINIPVGIIGAITTLMLM). Residues 186–196 (PNYTMQTRRFD) lie on the Periplasmic side of the membrane. Residues 197 to 217 (LSGFLLLAVGMAVLTLALDGS) form a helical membrane-spanning segment. Residues 218-224 (KGTGFSP) are Cytoplasmic-facing. A helical transmembrane segment spans residues 225-245 (LAIAGLVAVGVVALVLYLLHA). Over 246–262 (QNNNRALFSLKLFRTRT) the chain is Periplasmic. The chain crosses the membrane as a helical span at residues 263–283 (FSLGLAGSFAGRIGSGMLPFM). Residues 284 to 285 (TP) lie on the Cytoplasmic side of the membrane. The helical transmembrane segment at 286 to 306 (VFLQIGFGFSPFHAGLMMIPM) threads the bilayer. The Periplasmic segment spans residues 307–341 (VLGSMGMKRIVVQVVNRFGYRRVLVATTLGLSLVT). A helical membrane pass occupies residues 342–362 (LLFMTTALLGWYYVLPFVLFL). The Cytoplasmic portion of the chain corresponds to 363-395 (QGMVNSTRFSSMNTLTLKDLPDNLASSGNSLLS). A helical membrane pass occupies residues 396-416 (MIMQLSMSIGVTIAGLLLGLF). Residues 417–430 (GSQHVSVDSGTTQT) lie on the Periplasmic side of the membrane. A helical membrane pass occupies residues 431-451 (VFMYTWLSMASIIALPAFIFA). Topologically, residues 452 to 471 (RVPNDTHQNVAISRRKRSAQ) are cytoplasmic.

The protein belongs to the major facilitator superfamily. TCR/Tet family.

The protein resides in the cell inner membrane. This is Putative multidrug resistance protein MdtD from Escherichia coli O6:H1 (strain CFT073 / ATCC 700928 / UPEC).